Consider the following 472-residue polypeptide: tRNA modification GTPase MnmE (472 aa).

(6S)-5-formyl-5,6,7,8-tetrahydrofolate contacts are provided by arginine 28, glutamate 91, and lysine 130. The TrmE-type G domain maps to 225-391 (GAKVVLAGKT…LSEKAYSVLA (167 aa)). Residue asparagine 235 participates in K(+) binding. Residues 235–240 (NAGKSS), 254–260 (SDIHGTT), and 279–282 (DTAG) each bind GTP. Serine 239 is a Mg(2+) binding site. Residues serine 254, isoleucine 256, and threonine 259 each contribute to the K(+) site. Mg(2+) is bound at residue threonine 260. (6S)-5-formyl-5,6,7,8-tetrahydrofolate is bound at residue lysine 472.

This sequence belongs to the TRAFAC class TrmE-Era-EngA-EngB-Septin-like GTPase superfamily. TrmE GTPase family. Homodimer. Heterotetramer of two MnmE and two MnmG subunits. K(+) is required as a cofactor.

Its subcellular location is the cytoplasm. Exhibits a very high intrinsic GTPase hydrolysis rate. Involved in the addition of a carboxymethylaminomethyl (cmnm) group at the wobble position (U34) of certain tRNAs, forming tRNA-cmnm(5)s(2)U34. The sequence is that of tRNA modification GTPase MnmE from Treponema denticola (strain ATCC 35405 / DSM 14222 / CIP 103919 / JCM 8153 / KCTC 15104).